Reading from the N-terminus, the 523-residue chain is Apolipoprotein N-acyltransferase (523 aa).

A run of 7 helical transmembrane segments spans residues 26-46 (LRFAAPLAALLGVMHTLAFAP), 49-66 (WWWLQILSLAGLAALVRQ), 74-94 (AWVGYAFGLGWFLSGIWWLYI), 109-129 (AAVLLFSAYLALHPALAAWLW), 137-157 (QLSGAASALVFGAAWLVSEWL), 185-205 (LVGVYGVVAIAATLAGLLCAA), and 212-232 (WLAGLAGVAVLAAGWPLHTIA). The CN hydrolase domain maps to 246–487 (LQGNVPQDVK…LGTLQADVQG (242 aa)). Glutamate 284 acts as the Proton acceptor in catalysis. Residue lysine 345 is part of the active site. The active-site Nucleophile is the cysteine 395. The helical transmembrane segment at 494 to 514 (FVRTGNAPALGAGVLVLLAAL) threads the bilayer.

Belongs to the CN hydrolase family. Apolipoprotein N-acyltransferase subfamily.

The protein localises to the cell inner membrane. It catalyses the reaction N-terminal S-1,2-diacyl-sn-glyceryl-L-cysteinyl-[lipoprotein] + a glycerophospholipid = N-acyl-S-1,2-diacyl-sn-glyceryl-L-cysteinyl-[lipoprotein] + a 2-acyl-sn-glycero-3-phospholipid + H(+). It participates in protein modification; lipoprotein biosynthesis (N-acyl transfer). Catalyzes the phospholipid dependent N-acylation of the N-terminal cysteine of apolipoprotein, the last step in lipoprotein maturation. This is Apolipoprotein N-acyltransferase from Ralstonia nicotianae (strain ATCC BAA-1114 / GMI1000) (Ralstonia solanacearum).